Reading from the N-terminus, the 572-residue chain is Fatty acid amide hydrolase 1 (572 aa).

The first 14 residues, 1–14 (MIFYLVLLVLGAIA), serve as a signal peptide directing secretion. The stretch at 32 to 63 (IVAQRRRDDLSKNVEQARKAADKLDTQRRDWI) forms a coiled coil. Catalysis depends on charge relay system residues K139 and S214. Residues S214 and 235–238 (VGGS) each bind substrate. S238 (acyl-ester intermediate) is an active-site residue.

This sequence belongs to the amidase family. In terms of tissue distribution, expressed in the pharynx, some pharyngeal neurons, the posterior intestine and anal depressor muscles.

It catalyses the reaction N-(5Z,8Z,11Z,14Z-eicosatetraenoyl)-ethanolamine + H2O = ethanolamine + (5Z,8Z,11Z,14Z)-eicosatetraenoate. It carries out the reaction (9Z)-octadecenamide + H2O = (9Z)-octadecenoate + NH4(+). The enzyme catalyses (5Z,8Z,11Z,14Z,17Z-eicosapentaenoyl) ethanolamine + H2O = (5Z,8Z,11Z,14Z,17Z)-eicosapentaenoate + ethanolamine. The catalysed reaction is N-(9Z-hexadecenoyl) ethanolamine + H2O = (9Z)-hexadecenoate + ethanolamine. It catalyses the reaction N-(9Z-octadecenoyl) ethanolamine + H2O = ethanolamine + (9Z)-octadecenoate. It carries out the reaction N-octadecanoyl ethanolamine + H2O = octadecanoate + ethanolamine. The enzyme catalyses N-docosanoyl-ethanolamine + H2O = docosanoate + ethanolamine. The catalysed reaction is N-(15Z-tetracosenoyl)-ethanolamine + H2O = (15Z)-tetracosenoate + ethanolamine. It catalyses the reaction N-hexadecanoylethanolamine + H2O = ethanolamine + hexadecanoate. It carries out the reaction N-(9Z,12Z-octadecadienoyl)-ethanolamine + H2O = ethanolamine + (9Z,12Z)-octadecadienoate. The enzyme catalyses (9Z)-octadecenoate + glycine = N-(9Z-octadecenoyl)glycine + H2O. The catalysed reaction is N-(5Z,8Z,11Z,14Z)-eicosatetraenoyl-glycine + H2O = (5Z,8Z,11Z,14Z)-eicosatetraenoate + glycine. It catalyses the reaction N-(5Z,8Z,11Z,14Z-eicosatetraenoyl)-L-serine + H2O = (5Z,8Z,11Z,14Z)-eicosatetraenoate + L-serine. In terms of biological role, catalyzes the hydrolysis of endogenous amidated lipids like anandamide (AEA or N-(5Z,8Z,11Z,14Z-eicosatetraenoyl)-ethanolamine) and eicosapentaneoyl ethanolamide (EPEA or (5Z,8Z,11Z,14Z,17Z-eicosapentaenoyl) ethanolamine), as well as other fatty amides, to their corresponding fatty acids, thereby regulating the signaling functions of these molecules. EPEA promotes dauer formation and may constitute a signal of high nutrient availability. Breakdown of EPEA may promote lifespan extension when nutrient availability is high. Facilitates axon regeneration after injury by degradating inhibitory compounds such as AEA. FAAH cooperates with PM20D1 in the hydrolysis of amino acid-conjugated fatty acids such as N-fatty acyl glycine and N-fatty acyl-L-serine, thereby acting as a physiological regulator of specific subsets of intracellular, but not of extracellular, N-fatty acyl amino acids. This is Fatty acid amide hydrolase 1 from Caenorhabditis elegans.